We begin with the raw amino-acid sequence, 267 residues long: PHD finger protein ALFIN-LIKE 7 (267 aa).

Positions 162–207 (TKVSNGSSKSNKSNPKPSKQSNSNSKPAKPPQPKDEEDSGPEGTED) are disordered. The span at 165–188 (SNGSSKSNKSNPKPSKQSNSNSKP) shows a compositional bias: low complexity. Residues 196-207 (DEEDSGPEGTED) show a composition bias toward acidic residues. A PHD-type zinc finger spans residues 211-263 (AYMCGACGETYANGEFWICCDVCEKWFHGKCVRITPAKAEHIKQYKCPGCSSK).

Belongs to the Alfin family. Interacts with H3K4me3 and to a lesser extent with H3K4me2.

The protein resides in the nucleus. Functionally, histone-binding component that specifically recognizes H3 tails trimethylated on 'Lys-4' (H3K4me3), which mark transcription start sites of virtually all active genes. This Oryza sativa subsp. japonica (Rice) protein is PHD finger protein ALFIN-LIKE 7.